Consider the following 564-residue polypeptide: Benomyl/methotrexate resistance protein (564 aa).

Residues I60–D101 form a disordered region. Residues N67 to D88 are compositionally biased toward low complexity. The next 12 membrane-spanning stretches (helical) occupy residues A116–Y136, V153–S173, T184–V204, L210–G229, L241–F262, W274–L294, I358–F374, Y393–I411, I431–S451, H457–F476, P489–I506, and W530–L551.

It belongs to the major facilitator superfamily. CAR1 family.

Its subcellular location is the membrane. Its function is as follows. Probable transporter. Confers resistance to benomyl and methotrexate. This Candida albicans (Yeast) protein is Benomyl/methotrexate resistance protein (MDR1).